We begin with the raw amino-acid sequence, 180 residues long: CASP-like protein 2A3 (180 aa).

Topologically, residues 1-13 (MELIYGSTMRKKW) are cytoplasmic. Residues 14–34 (IEPALRFLPVGLCISALALML) traverse the membrane as a helical segment. The Extracellular segment spans residues 35-55 (KSKEGNENGILEYKHVGAFRY). A helical membrane pass occupies residues 56–76 (LAYANGICAAYSVLSTFNSVV). Residues 77–85 (PRSCSLSRA) lie on the Cytoplasmic side of the membrane. A helical membrane pass occupies residues 86–106 (WFVFVFDQAFTYLMLGAGAVV). Residues 107-135 (TEVLYLAYKGDEKITWFEICPYYGRFCNR) lie on the Extracellular side of the membrane. The helical transmembrane segment at 136-156 (VAASLVISFLALLCFIPLSLI) threads the bilayer. Residues 157-180 (SAYRVFSKYDPPSLCKKDQITSQS) lie on the Cytoplasmic side of the membrane.

The protein belongs to the Casparian strip membrane proteins (CASP) family. As to quaternary structure, homodimer and heterodimers.

The protein resides in the cell membrane. The protein is CASP-like protein 2A3 of Picea sitchensis (Sitka spruce).